The chain runs to 255 residues: Ribonuclease PH (255 aa).

Residues Arg86 and 124-126 contribute to the phosphate site; that span reads GTR.

It belongs to the RNase PH family. In terms of assembly, homohexameric ring arranged as a trimer of dimers.

The enzyme catalyses tRNA(n+1) + phosphate = tRNA(n) + a ribonucleoside 5'-diphosphate. Its function is as follows. Phosphorolytic 3'-5' exoribonuclease that plays an important role in tRNA 3'-end maturation. Removes nucleotide residues following the 3'-CCA terminus of tRNAs; can also add nucleotides to the ends of RNA molecules by using nucleoside diphosphates as substrates, but this may not be physiologically important. Probably plays a role in initiation of 16S rRNA degradation (leading to ribosome degradation) during starvation. The protein is Ribonuclease PH of Aquifex aeolicus (strain VF5).